The primary structure comprises 305 residues: MWNLRITPLSFGAACQGIFTSTLLLSSLTVPLVCTIVYDSCLYMDINASRALANVYDLPDDFFPKIDDLVRDAKDALEPYWKSDSIKKHVLIATHFVDLIEDFWQTTQGMHEIAESLRAVIPPTTAPVPTGYLIQHEEAEEIPLGDLFKHQEERIVSFQPDYPITARIHAHLKAYAKINEESLDRARRLLWWHYNCLLWGEANVTNYISRLRTWLSTPEKYRGRDAPTIEAITRPIQVAQGGRKTSSGTRKPRGLEPRRRKVKTTVVYGRRRSKSRERRAPSPQRAGSPLPRSSSSHHRSPSPRK.

A signal peptide spans 1–19 (MWNLRITPLSFGAACQGIF). A disordered region spans residues 226 to 305 (APTIEAITRP…SHHRSPSPRK (80 aa)). Basic residues-rich tracts occupy residues 258–277 (RRRK…KSRE) and 295–305 (SSHHRSPSPRK). Positions 273-305 (SKSRERRAPSPQRAGSPLPRSSSSHHRSPSPRK) are excised as a propeptide.

This sequence belongs to the avihepadnavirus precore antigen family. As to quaternary structure, homodimerizes.

Its subcellular location is the secreted. May regulate immune response to the intracellular capsid in acting as a T-cell tolerogen, by having an immunoregulatory effect which prevents destruction of infected cells by cytotoxic T-cells. The polypeptide is External core antigen (C) (Duck hepatitis B virus (strain China) (DHBV)).